The following is a 214-amino-acid chain: Holliday junction branch migration complex subunit RuvA (214 aa).

The domain I stretch occupies residues 1 to 63 (MISFLRGTVA…EDSLTLFGFS (63 aa)). The segment at 64 to 142 (SDDEREVFDV…PHGTGAAAAP (79 aa)) is domain II. Residues 143–153 (AAAASAPWKPQ) are flexible linker. Residues 153–214 (QVVAAMTSLG…RAGNRVGSRG (62 aa)) form a domain III region.

It belongs to the RuvA family. As to quaternary structure, homotetramer. Forms an RuvA(8)-RuvB(12)-Holliday junction (HJ) complex. HJ DNA is sandwiched between 2 RuvA tetramers; dsDNA enters through RuvA and exits via RuvB. An RuvB hexamer assembles on each DNA strand where it exits the tetramer. Each RuvB hexamer is contacted by two RuvA subunits (via domain III) on 2 adjacent RuvB subunits; this complex drives branch migration. In the full resolvosome a probable DNA-RuvA(4)-RuvB(12)-RuvC(2) complex forms which resolves the HJ.

It localises to the cytoplasm. Its function is as follows. The RuvA-RuvB-RuvC complex processes Holliday junction (HJ) DNA during genetic recombination and DNA repair, while the RuvA-RuvB complex plays an important role in the rescue of blocked DNA replication forks via replication fork reversal (RFR). RuvA specifically binds to HJ cruciform DNA, conferring on it an open structure. The RuvB hexamer acts as an ATP-dependent pump, pulling dsDNA into and through the RuvAB complex. HJ branch migration allows RuvC to scan DNA until it finds its consensus sequence, where it cleaves and resolves the cruciform DNA. This Arthrobacter sp. (strain FB24) protein is Holliday junction branch migration complex subunit RuvA.